The sequence spans 463 residues: Glutamate--tRNA ligase 1 (463 aa).

The 'HIGH' region signature appears at 10 to 20 (PSPTGYLHIGG). The short motif at 238–242 (KLSKR) is the 'KMSKS' region element. ATP is bound at residue lysine 241.

It belongs to the class-I aminoacyl-tRNA synthetase family. Glutamate--tRNA ligase type 1 subfamily. As to quaternary structure, monomer.

Its subcellular location is the cytoplasm. It carries out the reaction tRNA(Glu) + L-glutamate + ATP = L-glutamyl-tRNA(Glu) + AMP + diphosphate. Its function is as follows. Catalyzes the attachment of glutamate to tRNA(Glu) in a two-step reaction: glutamate is first activated by ATP to form Glu-AMP and then transferred to the acceptor end of tRNA(Glu). This chain is Glutamate--tRNA ligase 1, found in Helicobacter pylori (strain G27).